The following is a 202-amino-acid chain: Dephospho-CoA kinase (202 aa).

The region spanning 4-201 is the DPCK domain; it reads VIGLTGGIAS…QKYLAMSKQN (198 aa). 12–17 contributes to the ATP binding site; the sequence is ASGKTT.

This sequence belongs to the CoaE family.

It is found in the cytoplasm. It catalyses the reaction 3'-dephospho-CoA + ATP = ADP + CoA + H(+). It participates in cofactor biosynthesis; coenzyme A biosynthesis; CoA from (R)-pantothenate: step 5/5. In terms of biological role, catalyzes the phosphorylation of the 3'-hydroxyl group of dephosphocoenzyme A to form coenzyme A. This chain is Dephospho-CoA kinase, found in Vibrio vulnificus (strain CMCP6).